Here is a 426-residue protein sequence, read N- to C-terminus: Serine--tRNA ligase (426 aa).

231–233 (TSE) provides a ligand contact to L-serine. Residue 262–264 (RSE) participates in ATP binding. E285 contacts L-serine. 349-352 (EISS) is an ATP binding site. Residue S385 coordinates L-serine.

Belongs to the class-II aminoacyl-tRNA synthetase family. Type-1 seryl-tRNA synthetase subfamily. Homodimer. The tRNA molecule binds across the dimer.

Its subcellular location is the cytoplasm. It catalyses the reaction tRNA(Ser) + L-serine + ATP = L-seryl-tRNA(Ser) + AMP + diphosphate + H(+). The catalysed reaction is tRNA(Sec) + L-serine + ATP = L-seryl-tRNA(Sec) + AMP + diphosphate + H(+). It participates in aminoacyl-tRNA biosynthesis; selenocysteinyl-tRNA(Sec) biosynthesis; L-seryl-tRNA(Sec) from L-serine and tRNA(Sec): step 1/1. Catalyzes the attachment of serine to tRNA(Ser). Is also able to aminoacylate tRNA(Sec) with serine, to form the misacylated tRNA L-seryl-tRNA(Sec), which will be further converted into selenocysteinyl-tRNA(Sec). In Legionella pneumophila (strain Lens), this protein is Serine--tRNA ligase.